A 70-amino-acid polypeptide reads, in one-letter code: Large ribosomal subunit protein bL28 (70 aa).

Belongs to the bacterial ribosomal protein bL28 family.

The protein is Large ribosomal subunit protein bL28 of Thermosipho melanesiensis (strain DSM 12029 / CIP 104789 / BI429).